Reading from the N-terminus, the 246-residue chain is MRSGVIAQKLGMTRIYNDAGEHVPVTVLRLENCQVVAQRTVEKNGYTAVQLGVGFAKVKNTSQALRGHFAKASVEPKAKIAEFRVSPDNLLDIGTEITAEHFVPGQRVDVTGTTIGKGFAGVMKRHNFGGHRASHGNSITHRAHGSTGQCQDPGKVFKGKKMAGHMGQVRVTTQNIEVVSTDVERGLILVRGAVSGSKGAWILVRDAIKKPLPDNAPKPAGIRQLAKEKTEMVAPVTETSEVEGAE.

N5-methylglutamine is present on glutamine 151.

This sequence belongs to the universal ribosomal protein uL3 family. As to quaternary structure, part of the 50S ribosomal subunit. Forms a cluster with proteins L14 and L19. Post-translationally, methylated by PrmB.

One of the primary rRNA binding proteins, it binds directly near the 3'-end of the 23S rRNA, where it nucleates assembly of the 50S subunit. The protein is Large ribosomal subunit protein uL3 of Bartonella henselae (strain ATCC 49882 / DSM 28221 / CCUG 30454 / Houston 1) (Rochalimaea henselae).